The following is a 682-amino-acid chain: Cyclic nucleotide-gated cation channel (682 aa).

The segment at 1–41 (MTGQAALERSVSSHRLSVRSRLEGEAERAESAISRTDGDDD) is disordered. Over 1-136 (MTGQAALERS…EGFVVSQSDD (136 aa)) the chain is Cytoplasmic. Residues 20–30 (SRLEGEAERAE) are compositionally biased toward basic and acidic residues. A helical membrane pass occupies residues 137-157 (IYYYWLFFIALASLYNWIMLV). The Extracellular portion of the chain corresponds to 158-169 (ARACFDQLQDEN). The helical transmembrane segment at 170 to 190 (FFLWVGLDYLCDVIYILDTCI) threads the bilayer. Residues 191 to 218 (RLRTGYLEQGLLVKDLAKLRDNYIRTLQ) lie on the Cytoplasmic side of the membrane. A helical membrane pass occupies residues 219–239 (FKLDFLSILPTELLFFVTGYV). The Extracellular portion of the chain corresponds to 240–272 (PQLRFNRLLRFSRMFEFFDRTETRTNYPNAFRI). The helical transmembrane segment at 273–293 (CNLILYILVIIHWNACIYYAI) threads the bilayer. Over 294–311 (SKALGLSSDTWVYSGQNK) the chain is Cytoplasmic. Residues 312-332 (TLSFCYVYCFYWSTLTLTTIG) traverse the membrane as a helical segment. The Extracellular portion of the chain corresponds to 333-343 (EMPPPVKDEEY). The helical transmembrane segment at 344–364 (VFVVFDFLVGVLIFATIVGNV) threads the bilayer. Residues 365–682 (GSMIANMNAT…SAETNSEEET (318 aa)) lie on the Cytoplasmic side of the membrane. Residues 455 to 577 (LLVE…QGLL), Glu514, and Arg529 each bind 3',5'-cyclic AMP. The segment at 649–682 (GEHAGVPTHTHADIHAQPETHTRTSAETNSEEET) is disordered. Positions 658-672 (THADIHAQPETHTRT) are enriched in basic and acidic residues.

It belongs to the cyclic nucleotide-gated cation channel (TC 1.A.1.5) family. Olfactory neurons.

It localises to the membrane. Its function is as follows. This cyclic nucleotide-gated channel is activated equally well by both cAMP and cGMP. In Ictalurus punctatus (Channel catfish), this protein is Cyclic nucleotide-gated cation channel.